We begin with the raw amino-acid sequence, 125 residues long: Snaclec B6 (125 aa).

Intrachain disulfides connect Cys2-Cys13, Cys30-Cys119, and Cys96-Cys111. The C-type lectin domain occupies His9–Gln120. Asn95 carries an N-linked (GlcNAc...) asparagine glycan. Asn112 is a glycosylation site (N-linked (GlcNAc...) asparagine).

This sequence belongs to the snaclec family. Heterodimer; disulfide-linked. As to expression, expressed by the venom gland.

Its subcellular location is the secreted. In terms of biological role, interferes with one step of hemostasis (modulation of platelet aggregation, or coagulation cascade, for example). The sequence is that of Snaclec B6 from Macrovipera lebetinus (Levantine viper).